Here is a 62-residue protein sequence, read N- to C-terminus: Large ribosomal subunit protein uL29 (62 aa).

It belongs to the universal ribosomal protein uL29 family.

This Helicobacter hepaticus (strain ATCC 51449 / 3B1) protein is Large ribosomal subunit protein uL29.